The sequence spans 446 residues: Methylenetetrahydrofolate--tRNA-(uracil-5-)-methyltransferase TrmFO (446 aa).

8–13 is an FAD binding site; it reads GAGLAG.

Belongs to the MnmG family. TrmFO subfamily. It depends on FAD as a cofactor.

It is found in the cytoplasm. The catalysed reaction is uridine(54) in tRNA + (6R)-5,10-methylene-5,6,7,8-tetrahydrofolate + NADH + H(+) = 5-methyluridine(54) in tRNA + (6S)-5,6,7,8-tetrahydrofolate + NAD(+). It catalyses the reaction uridine(54) in tRNA + (6R)-5,10-methylene-5,6,7,8-tetrahydrofolate + NADPH + H(+) = 5-methyluridine(54) in tRNA + (6S)-5,6,7,8-tetrahydrofolate + NADP(+). Functionally, catalyzes the folate-dependent formation of 5-methyl-uridine at position 54 (M-5-U54) in all tRNAs. The chain is Methylenetetrahydrofolate--tRNA-(uracil-5-)-methyltransferase TrmFO from Paracoccus denitrificans (strain Pd 1222).